We begin with the raw amino-acid sequence, 292 residues long: Phosphatidylserine decarboxylase proenzyme (292 aa).

Catalysis depends on charge relay system; for autoendoproteolytic cleavage activity residues aspartate 98, histidine 153, and serine 254. Catalysis depends on serine 254, which acts as the Schiff-base intermediate with substrate; via pyruvic acid; for decarboxylase activity. Position 254 is a pyruvic acid (Ser); by autocatalysis (serine 254).

The protein belongs to the phosphatidylserine decarboxylase family. PSD-B subfamily. Prokaryotic type I sub-subfamily. Heterodimer of a large membrane-associated beta subunit and a small pyruvoyl-containing alpha subunit. The cofactor is pyruvate. Is synthesized initially as an inactive proenzyme. Formation of the active enzyme involves a self-maturation process in which the active site pyruvoyl group is generated from an internal serine residue via an autocatalytic post-translational modification. Two non-identical subunits are generated from the proenzyme in this reaction, and the pyruvate is formed at the N-terminus of the alpha chain, which is derived from the carboxyl end of the proenzyme. The autoendoproteolytic cleavage occurs by a canonical serine protease mechanism, in which the side chain hydroxyl group of the serine supplies its oxygen atom to form the C-terminus of the beta chain, while the remainder of the serine residue undergoes an oxidative deamination to produce ammonia and the pyruvoyl prosthetic group on the alpha chain. During this reaction, the Ser that is part of the protease active site of the proenzyme becomes the pyruvoyl prosthetic group, which constitutes an essential element of the active site of the mature decarboxylase.

It localises to the cell membrane. The catalysed reaction is a 1,2-diacyl-sn-glycero-3-phospho-L-serine + H(+) = a 1,2-diacyl-sn-glycero-3-phosphoethanolamine + CO2. The protein operates within phospholipid metabolism; phosphatidylethanolamine biosynthesis; phosphatidylethanolamine from CDP-diacylglycerol: step 2/2. Functionally, catalyzes the formation of phosphatidylethanolamine (PtdEtn) from phosphatidylserine (PtdSer). This Halorhodospira halophila (strain DSM 244 / SL1) (Ectothiorhodospira halophila (strain DSM 244 / SL1)) protein is Phosphatidylserine decarboxylase proenzyme.